Reading from the N-terminus, the 89-residue chain is Small ribosomal subunit protein uS15 (89 aa).

Belongs to the universal ribosomal protein uS15 family. In terms of assembly, part of the 30S ribosomal subunit. Forms a bridge to the 50S subunit in the 70S ribosome, contacting the 23S rRNA.

One of the primary rRNA binding proteins, it binds directly to 16S rRNA where it helps nucleate assembly of the platform of the 30S subunit by binding and bridging several RNA helices of the 16S rRNA. Its function is as follows. Forms an intersubunit bridge (bridge B4) with the 23S rRNA of the 50S subunit in the ribosome. The sequence is that of Small ribosomal subunit protein uS15 from Limosilactobacillus reuteri (strain DSM 20016) (Lactobacillus reuteri).